Reading from the N-terminus, the 688-residue chain is PTS system glucoside-specific EIICBA component (688 aa).

Residues 3 to 427 form the PTS EIIC type-1 domain; sequence KKLFGQLQRI…FKLKTPGRED (425 aa). 10 consecutive transmembrane segments (helical) span residues 12 to 32, 81 to 101, 137 to 157, 182 to 202, 223 to 243, 284 to 304, 315 to 335, 340 to 360, 364 to 384, and 395 to 415; these read IGKA…LLAF, LGLA…YLIM, LVLG…MGAL, FVPI…SFAW, LTTF…LHHI, AFTT…AFAI, VVGG…ITEP, FLFV…TSFL, LLGV…ILYG, and LVIP…DFAI. A PTS EIIB type-1 domain is found at 438–519; sequence AKLPFDVLDA…AKIMSGEITK (82 aa). Cysteine 460 acts as the Phosphocysteine intermediate; for EIIB activity in catalysis. Positions 560-664 constitute a PTS EIIA type-1 domain; sequence DQVFAGKMMG…SIVTPMIITN (105 aa). Residue histidine 612 is the Tele-phosphohistidine intermediate; for EIIA activity of the active site.

The protein localises to the cell membrane. The phosphoenolpyruvate-dependent sugar phosphotransferase system (sugar PTS), a major carbohydrate active -transport system, catalyzes the phosphorylation of incoming sugar substrates concomitantly with their translocation across the cell membrane. This system is involved in alpha- and beta-glucoside transport. In Staphylococcus aureus (strain bovine RF122 / ET3-1), this protein is PTS system glucoside-specific EIICBA component (glcB).